Consider the following 566-residue polypeptide: Sulfite reductase [NADPH] hemoprotein beta-component (566 aa).

Residues C430, C436, C475, and C479 each coordinate [4Fe-4S] cluster. C479 contributes to the siroheme binding site.

The protein belongs to the nitrite and sulfite reductase 4Fe-4S domain family. Alpha(8)-beta(8). The alpha component is a flavoprotein, the beta component is a hemoprotein. Requires siroheme as cofactor. [4Fe-4S] cluster serves as cofactor.

The catalysed reaction is hydrogen sulfide + 3 NADP(+) + 3 H2O = sulfite + 3 NADPH + 4 H(+). It functions in the pathway sulfur metabolism; hydrogen sulfide biosynthesis; hydrogen sulfide from sulfite (NADPH route): step 1/1. Its function is as follows. Component of the sulfite reductase complex that catalyzes the 6-electron reduction of sulfite to sulfide. This is one of several activities required for the biosynthesis of L-cysteine from sulfate. The polypeptide is Sulfite reductase [NADPH] hemoprotein beta-component (Baumannia cicadellinicola subsp. Homalodisca coagulata).